The chain runs to 434 residues: Deferrochelatase (434 aa).

Positions 1 to 45 (MRDKTGPKFGPYQPDDEAVSPSRRRLILGMGMVSGALVLGGAKTA) form a signal peptide, tat-type signal. Residues 247–249 (GTA), H340, 345–347 (NPR), and R358 each bind heme b.

It belongs to the DyP-type peroxidase family. EfeB subfamily. Homodimer. Part of a ferrous iron transporter composed of EfeU, EfeO and EfeB. Heme b serves as cofactor. Post-translationally, predicted to be exported by the Tat system. The position of the signal peptide cleavage has not been experimentally proven.

It is found in the periplasm. The catalysed reaction is heme b + 2 H(+) = protoporphyrin IX + Fe(2+). Involved in the recovery of exogenous heme iron. Extracts iron from heme while preserving the protoporphyrin ring intact. In Yersinia pseudotuberculosis serotype I (strain IP32953), this protein is Deferrochelatase (efeB).